A 65-amino-acid chain; its full sequence is UPF0434 protein BH12860 (65 aa).

The protein belongs to the UPF0434 family.

This chain is UPF0434 protein BH12860, found in Bartonella henselae (strain ATCC 49882 / DSM 28221 / CCUG 30454 / Houston 1) (Rochalimaea henselae).